A 270-amino-acid polypeptide reads, in one-letter code: Extracellular metalloprotease MCYG_04966 (270 aa).

The signal sequence occupies residues 1–19 (MRLSLFLSGLAAAGSIVSA). The N-linked (GlcNAc...) asparagine glycan is linked to Asn-135. A Zn(2+)-binding site is contributed by His-184. The active site involves Glu-185. Residue His-188 participates in Zn(2+) binding. N-linked (GlcNAc...) asparagine glycosylation occurs at Asn-199. The disordered stretch occupies residues 208–227 (VADTPPQSKKTSGCPNSQDS). Positions 212 to 227 (PPQSKKTSGCPNSQDS) are enriched in polar residues. A disulfide bridge links Cys-221 with Cys-247.

This sequence belongs to the peptidase M43B family.

The protein localises to the secreted. Its function is as follows. Secreted metalloproteinase that allows assimilation of proteinaceous substrates. Plays a pivotal role as a pathogenicity determinant during infections and contributes to the ability of the pathogen to persist within the mammalian host. This Arthroderma otae (strain ATCC MYA-4605 / CBS 113480) (Microsporum canis) protein is Extracellular metalloprotease MCYG_04966.